The chain runs to 499 residues: NADH-quinone oxidoreductase subunit 14 (499 aa).

Transmembrane regions (helical) follow at residues 9-29 (ILPE…GAYL), 37-57 (TLLW…GLGN), 76-96 (FAKV…ADYM), 104-124 (FEFP…VSAG), 126-146 (LLTL…VAAM), 161-181 (FVLG…VYGF), 196-216 (AGHL…GLSF), 235-255 (PTPV…ALIA), 269-289 (WSQI…IAGI), 301-321 (SSIA…AIGV), 324-344 (MLLY…FILS), 369-389 (ALAM…LGFF), 402-422 (GMGW…FYYL), and 446-466 (YLAL…MFGV).

It belongs to the complex I subunit 2 family. As to quaternary structure, NDH-1 is composed of at least 14 different subunits, Nqo1 to Nqo14. The complex has a L-shaped structure, with the hydrophobic arm (subunits Nqo7, Nqo8, Nqo10 to Nqo14) embedded in the inner membrane and the hydrophilic peripheral arm (subunits Nqo1 to Nqo6, Nqo9) protruding into the bacterial cytoplasm. The hydrophilic domain contains all the redox centers.

The protein resides in the cell inner membrane. The enzyme catalyses a quinone + NADH + 5 H(+)(in) = a quinol + NAD(+) + 4 H(+)(out). Its function is as follows. NDH-1 shuttles electrons from NADH, via FMN and iron-sulfur (Fe-S) centers, to quinones in the respiratory chain. The immediate electron acceptor for the enzyme in this species is believed to be ubiquinone. Couples the redox reaction to proton translocation (for every two electrons transferred, four hydrogen ions are translocated across the cytoplasmic membrane), and thus conserves the redox energy in a proton gradient. In Paracoccus denitrificans, this protein is NADH-quinone oxidoreductase subunit 14.